We begin with the raw amino-acid sequence, 581 residues long: NADH-quinone oxidoreductase subunit C/D (581 aa).

Residues 1 to 172 form an NADH dehydrogenase I subunit C region; the sequence is MSASELVTEL…PLFNMTASLF (172 aa). The NADH dehydrogenase I subunit D stretch occupies residues 196-581; sequence ELMILNYGPH…IDYVMSDVDR (386 aa).

This sequence in the N-terminal section; belongs to the complex I 30 kDa subunit family. In the C-terminal section; belongs to the complex I 49 kDa subunit family. NDH-1 is composed of 13 different subunits. Subunits NuoB, CD, E, F, and G constitute the peripheral sector of the complex.

It localises to the cell inner membrane. It catalyses the reaction a quinone + NADH + 5 H(+)(in) = a quinol + NAD(+) + 4 H(+)(out). In terms of biological role, NDH-1 shuttles electrons from NADH, via FMN and iron-sulfur (Fe-S) centers, to quinones in the respiratory chain. The immediate electron acceptor for the enzyme in this species is believed to be ubiquinone. Couples the redox reaction to proton translocation (for every two electrons transferred, four hydrogen ions are translocated across the cytoplasmic membrane), and thus conserves the redox energy in a proton gradient. This chain is NADH-quinone oxidoreductase subunit C/D, found in Rhodopseudomonas palustris (strain TIE-1).